The sequence spans 1381 residues: Protein HEG homolog 1 (1381 aa).

Residues 1-29 (MASPRASRWPPPLLLLLLPLLLLPPAAPG) form the signal peptide. Residues 24-108 (PPAAPGTRDP…APRGGSADAA (85 aa)) form a disordered region. Over residues 25-37 (PAAPGTRDPPPSP) the composition is skewed to pro residues. Residues 30-1248 (TRDPPPSPAR…GLNCGNPYQL (1219 aa)) are Extracellular-facing. Positions 38–52 (ARRALSLAPLAGAGL) are enriched in low complexity. The segment covering 55–74 (QLERRPEREPPPTPPRERRG) has biased composition (basic and acidic residues). Thr67 carries O-linked (GalNAc...) threonine glycosylation. The segment covering 93–105 (RGPSGRAPRGGSA) has biased composition (low complexity). Asn123, Asn159, Asn180, and Asn314 each carry an N-linked (GlcNAc...) asparagine glycan. Residues 301 to 316 (DLSSSSESTEKLNNST) show a composition bias toward low complexity. 2 disordered regions span residues 301–325 (DLSS…SVSQ) and 376–447 (PSAV…RSVA). Residues 424 to 444 (LASSSEVQNGSPMSQTETVSR) are compositionally biased toward polar residues. N-linked (GlcNAc...) asparagine glycosylation is found at Asn462, Asn520, and Asn610. Positions 491–529 (STVQSGGSHTALGDRSYSESSSTSSSESLNSSAPRGERS) are disordered. The span at 508–522 (SESSSTSSSESLNSS) shows a compositional bias: low complexity. Disordered regions lie at residues 612–680 (SSYD…PLPS), 706–757 (SDAS…PVTS), and 774–830 (QTAD…TLPA). A compositionally biased stretch (polar residues) spans 620 to 648 (QPSTESPVLHTSNLPSYTPTINMPNTSVV). Low complexity-rich tracts occupy residues 657 to 680 (SDSS…PLPS) and 706 to 748 (SDAS…PVLP). Polar residues-rich tracts occupy residues 774 to 784 (QTADLKSQSTP) and 792 to 809 (ESKS…TKAV). The span at 810 to 825 (TTNSPLPPSLTESSTE) shows a compositional bias: low complexity. The 39-residue stretch at 985-1023 (SVNSCAVNPCLHNGECVADNTSRGYHCRCPPSWQGDDCS) folds into the EGF-like 1 domain. 6 cysteine pairs are disulfide-bonded: Cys989–Cys1000, Cys994–Cys1011, Cys1013–Cys1022, Cys1029–Cys1040, Cys1034–Cys1049, and Cys1051–Cys1062. The EGF-like 2; calcium-binding domain occupies 1025 to 1063 (DVNECLSNPCPSTAMCNNTQGSFICKCPVGYQLEKGICN). N-linked (GlcNAc...) asparagine glycosylation is present at Asn1137. The helical transmembrane segment at 1249-1269 (ITVVIAAAGGGLLLILGIALI) threads the bilayer. Topologically, residues 1270–1381 (VTCCRKNKND…SDESRRRDYF (112 aa)) are cytoplasmic. Ser1359 bears the Phosphoserine mark.

In terms of assembly, interacts with CCM2 and KRIT1; KRIT1 markedly facilitates interaction with CCM2.

Its subcellular location is the cell membrane. It localises to the cell junction. It is found in the secreted. Functionally, receptor component of the CCM signaling pathway which is a crucial regulator of heart and vessel formation and integrity. May act through the stabilization of endothelial cell junctions. The chain is Protein HEG homolog 1 (HEG1) from Homo sapiens (Human).